We begin with the raw amino-acid sequence, 699 residues long: Elongation factor G (699 aa).

The tr-type G domain occupies 8–283 (EHIRNIGICA…AVVDFLPSPI (276 aa)). Residues 17 to 24 (AHIDAGKT), 81 to 85 (DTPGH), and 135 to 138 (NKMD) contribute to the GTP site.

This sequence belongs to the TRAFAC class translation factor GTPase superfamily. Classic translation factor GTPase family. EF-G/EF-2 subfamily.

It localises to the cytoplasm. Catalyzes the GTP-dependent ribosomal translocation step during translation elongation. During this step, the ribosome changes from the pre-translocational (PRE) to the post-translocational (POST) state as the newly formed A-site-bound peptidyl-tRNA and P-site-bound deacylated tRNA move to the P and E sites, respectively. Catalyzes the coordinated movement of the two tRNA molecules, the mRNA and conformational changes in the ribosome. The sequence is that of Elongation factor G from Rickettsia conorii (strain ATCC VR-613 / Malish 7).